A 258-amino-acid chain; its full sequence is Acetylglutamate kinase (258 aa).

Substrate-binding positions include 44 to 45, Arg66, and Asn158; that span reads GG. ATP is bound by residues 181 to 186 and 209 to 211; these read DVSGIL and IIT.

Belongs to the acetylglutamate kinase family. ArgB subfamily. Homodimer.

It is found in the cytoplasm. The catalysed reaction is N-acetyl-L-glutamate + ATP = N-acetyl-L-glutamyl 5-phosphate + ADP. It functions in the pathway amino-acid biosynthesis; L-arginine biosynthesis; N(2)-acetyl-L-ornithine from L-glutamate: step 2/4. Functionally, catalyzes the ATP-dependent phosphorylation of N-acetyl-L-glutamate. The sequence is that of Acetylglutamate kinase from Citrobacter koseri (strain ATCC BAA-895 / CDC 4225-83 / SGSC4696).